Here is a 184-residue protein sequence, read N- to C-terminus: Large ribosomal subunit protein uL5c (184 aa).

It belongs to the universal ribosomal protein uL5 family. Part of the 50S ribosomal subunit; contacts the 5S rRNA.

The protein localises to the plastid. The protein resides in the chloroplast. Binds 5S rRNA, forms part of the central protuberance of the 50S subunit. The polypeptide is Large ribosomal subunit protein uL5c (rpl5) (Mesostigma viride (Green alga)).